The chain runs to 1445 residues: Spermatogenesis-associated protein 31E1 (1445 aa).

A helical transmembrane segment spans residues 64-84; the sequence is WMMDFILTSVCGLVLLFLLLL. Disordered stretches follow at residues 90–115 and 169–262; these read PPSP…SRSR and VPAK…PDSS. Basic and acidic residues predominate over residues 101 to 110; the sequence is SREPQRERSG. Residues 241-260 are compositionally biased toward pro residues; the sequence is VFPPSPQPHGPLASSPPPPD. N-linked (GlcNAc...) asparagine glycosylation occurs at asparagine 408. Disordered stretches follow at residues 411–430, 460–557, 592–619, and 637–761; these read TQPQ…TVGN, NPSS…ERTQ, LSQP…PGVV, and QEQS…KEHL. Positions 664 to 681 are enriched in polar residues; the sequence is PQSQAEDTQQALLPSQPS. Asparagine 819, asparagine 906, and asparagine 1160 each carry an N-linked (GlcNAc...) asparagine glycan. Disordered regions lie at residues 894–966, 1143–1242, 1254–1280, and 1378–1445; these read FLGK…TCSL, RLPT…IGDK, KGQT…RKGG, and SPKA…CLAS. 2 stretches are compositionally biased toward polar residues: residues 906-915 and 1148-1165; these read NRTTSKSVPT and APLS…TASQ. Residues 1202 to 1217 are compositionally biased toward basic and acidic residues; it reads DKGEAHRRPRTGEQGH.

Belongs to the SPATA31 family.

It localises to the membrane. In terms of biological role, may play a role in spermatogenesis. This Homo sapiens (Human) protein is Spermatogenesis-associated protein 31E1 (SPATA31E1).